The chain runs to 196 residues: Imidazole glycerol phosphate synthase subunit HisH (196 aa).

Residues 2–196 (NIVIIDTNCS…QQLVKNFLEI (195 aa)) enclose the Glutamine amidotransferase type-1 domain. The Nucleophile role is filled by Cys77. Residues His178 and Glu180 contribute to the active site.

Heterodimer of HisH and HisF.

The protein resides in the cytoplasm. The enzyme catalyses 5-[(5-phospho-1-deoxy-D-ribulos-1-ylimino)methylamino]-1-(5-phospho-beta-D-ribosyl)imidazole-4-carboxamide + L-glutamine = D-erythro-1-(imidazol-4-yl)glycerol 3-phosphate + 5-amino-1-(5-phospho-beta-D-ribosyl)imidazole-4-carboxamide + L-glutamate + H(+). It catalyses the reaction L-glutamine + H2O = L-glutamate + NH4(+). It participates in amino-acid biosynthesis; L-histidine biosynthesis; L-histidine from 5-phospho-alpha-D-ribose 1-diphosphate: step 5/9. Functionally, IGPS catalyzes the conversion of PRFAR and glutamine to IGP, AICAR and glutamate. The HisH subunit catalyzes the hydrolysis of glutamine to glutamate and ammonia as part of the synthesis of IGP and AICAR. The resulting ammonia molecule is channeled to the active site of HisF. This is Imidazole glycerol phosphate synthase subunit HisH from Blochmanniella pennsylvanica (strain BPEN).